A 338-amino-acid chain; its full sequence is Very-long-chain 3-oxoacyl-CoA reductase (338 aa).

Residues 20 to 40 (LSAFLLVMGSIGVGRVIYQTL) form a helical membrane-spanning segment. NADP(+) contacts are provided by Val-66, Asn-95, Asp-120, Asn-147, Tyr-214, Lys-218, Val-247, and Ser-249. Tyr-214 (proton donor) is an active-site residue. Lys-218 functions as the Lowers pKa of active site Tyr in the catalytic mechanism.

Belongs to the short-chain dehydrogenases/reductases (SDR) family.

It localises to the endoplasmic reticulum membrane. The enzyme catalyses a very-long-chain (3R)-3-hydroxyacyl-CoA + NADP(+) = a very-long-chain 3-oxoacyl-CoA + NADPH + H(+). It participates in lipid metabolism; fatty acid biosynthesis. Its function is as follows. Component of the microsomal membrane bound fatty acid elongation system, which produces the 26-carbon very long-chain fatty acids (VLCFA) from palmitate. Catalyzes the reduction of the 3-ketoacyl-CoA intermediate that is formed in each cycle of fatty acid elongation. VLCFAs serve as precursors for ceramide and sphingolipids. The chain is Very-long-chain 3-oxoacyl-CoA reductase from Laccaria bicolor (strain S238N-H82 / ATCC MYA-4686) (Bicoloured deceiver).